A 167-amino-acid polypeptide reads, in one-letter code: Protein tyrosine phosphatase type IVA 2 (167 aa).

The 154-residue stretch at 5 to 158 (APVEISYENM…YRPKMRLRFR (154 aa)) folds into the Tyrosine-protein phosphatase domain. An intrachain disulfide couples Cys-46 to Cys-101. Asp-69 functions as the Proton donor in the catalytic mechanism. Cys-101 serves as the catalytic Phosphocysteine intermediate. A phosphate-binding site is contributed by 102-107 (VAGLGR). A substrate-binding site is contributed by Arg-107. Cys-164 carries the cysteine methyl ester modification. Residue Cys-164 is the site of S-farnesyl cysteine attachment. Residues 165 to 167 (CVQ) constitute a propeptide, removed in mature form.

Belongs to the protein-tyrosine phosphatase family. In terms of assembly, in contrast to PTP4A1 and PTP4A3, does not interact with tubulin. Interacts with RABGGTB. Farnesylated. Farnesylation is required for membrane targeting and for interaction with RABGGTB. As to expression, expressed in skeletal muscle, and at lower levels in liver, lung, heart, kidney, brain, testis and spleen.

It is found in the cell membrane. It localises to the early endosome. The protein localises to the cytoplasm. The catalysed reaction is O-phospho-L-tyrosyl-[protein] + H2O = L-tyrosyl-[protein] + phosphate. With respect to regulation, inhibited by sodium orthovanadate and pentamidine. Protein tyrosine phosphatase which stimulates progression from G1 into S phase during mitosis. Inhibits geranylgeranyl transferase type II activity by blocking the association between RABGGTA and RABGGTB. This Mus musculus (Mouse) protein is Protein tyrosine phosphatase type IVA 2 (Ptp4a2).